The chain runs to 271 residues: Troponin T, fast skeletal muscle (271 aa).

Positions M1–E21 are enriched in acidic residues. A disordered region spans residues M1–K74. Position 2 is an N-acetylserine (S2). Phosphoserine is present on S2. 2 stretches are compositionally biased toward basic and acidic residues: residues P31–R53 and P62–K74. S90 is subject to Phosphoserine. Residues R113 to K155 show a composition bias toward basic and acidic residues. Residues R113 to E194 form a disordered region. Phosphoserine is present on residues S161, S168, and S169. Positions T183–E194 are enriched in basic and acidic residues. Residue S205 is modified to Phosphoserine. Phosphotyrosine is present on Y221. The tract at residues I248–K271 is disordered.

It belongs to the troponin T family.

In terms of biological role, troponin T is the tropomyosin-binding subunit of troponin, the thin filament regulatory complex which confers calcium-sensitivity to striated muscle actomyosin ATPase activity. This chain is Troponin T, fast skeletal muscle (Tnnt3), found in Bos taurus (Bovine).